The sequence spans 65 residues: Large ribosomal subunit protein bL33 (65 aa).

A disordered region spans residues 19–40 (TVPSSKKRSAGVSRYTTEKNRR).

Belongs to the bacterial ribosomal protein bL33 family.

The sequence is that of Large ribosomal subunit protein bL33 from Prochlorococcus marinus (strain NATL2A).